The following is an 840-amino-acid chain: Probable alpha-glucuronidase A (840 aa).

The first 19 residues, 1–19 (MWSGIPIFALLSSIGIAAA), serve as a signal peptide directing secretion. Residues Asn-50, Asn-149, Asn-222, Asn-262, Asn-279, Asn-310, Asn-465, Asn-527, Asn-576, Asn-610, Asn-682, Asn-723, and Asn-732 are each glycosylated (N-linked (GlcNAc...) asparagine).

It belongs to the glycosyl hydrolase 67 family.

The protein resides in the secreted. The catalysed reaction is an alpha-D-glucuronoside + H2O = D-glucuronate + an alcohol. In terms of biological role, alpha-glucuronidase involved in the hydrolysis of xylan, a major structural heterogeneous polysaccharide found in plant biomass representing the second most abundant polysaccharide in the biosphere, after cellulose. Releases 4-O-methylglucuronic acid from xylan. This Aspergillus fumigatus (strain CBS 144.89 / FGSC A1163 / CEA10) (Neosartorya fumigata) protein is Probable alpha-glucuronidase A (aguA).